The primary structure comprises 879 residues: Prostaglandin F2 receptor negative regulator (879 aa).

The N-terminal stretch at 1–21 (MGRPAPRPLLLALLSLAVCRG) is a signal peptide. 2 consecutive Ig-like C2-type domains span residues 22 to 129 (RVVR…ATVQ) and 149 to 268 (PSSR…KAVE). Over 22–832 (RVVRVPAGTL…MDVLNAFKYP (811 aa)) the chain is Extracellular. 2 disulfides stabilise this stretch: C43–C119 and C169–C247. The N-linked (GlcNAc...) asparagine glycan is linked to N44. Positions 89–91 (RGD) match the Cell attachment site motif. Phosphothreonine is present on T271. 4 Ig-like C2-type domains span residues 276 to 389 (PTAL…WHKV), 406 to 527 (PEYQ…RNSS), 544 to 662 (ASED…AWSP), and 688 to 813 (PIFN…AEIH). C299 and C373 form a disulfide bridge. 3 N-linked (GlcNAc...) asparagine glycosylation sites follow: N300, N383, and N413. Positions 424–427 (PTEL) match the Endoplasmic reticulum retention signal motif. A disulfide bridge links C429 with C515. N-linked (GlcNAc...) asparagine glycosylation is found at N525, N600, N618, and N691. Residues C571 and C655 are joined by a disulfide bond. The short motif at 703–705 (RGD) is the Cell attachment site element. Cysteines 711 and 793 form a disulfide. Residues 833–853 (LLIGVGLSTVIGLLSCLIGYC) traverse the membrane as a helical segment. At 854–879 (SSHWCCKKEVRETRRERRRLMSMEMD) the chain is on the cytoplasmic side.

In terms of assembly, interacts with CD9 and CD81. Part of a complex composed of CD9, CD81 and IGSF8. Also seems to interact with CD63, CD82 and CD151. Reproductive tissues, lung and heart.

It is found in the endoplasmic reticulum membrane. The protein localises to the golgi apparatus. It localises to the trans-Golgi network membrane. Its function is as follows. Inhibits the binding of prostaglandin F2-alpha (PGF2-alpha) to its specific FP receptor, by decreasing the receptor number rather than the affinity constant. Functional coupling with the prostaglandin F2-alpha receptor seems to occur. In myoblasts, associates with tetraspanins CD9 and CD81 to prevent myotube fusion during muscle regeneration. The polypeptide is Prostaglandin F2 receptor negative regulator (Ptgfrn) (Rattus norvegicus (Rat)).